Reading from the N-terminus, the 359-residue chain is Peptide chain release factor 1 (359 aa).

Gln235 carries the post-translational modification N5-methylglutamine.

It belongs to the prokaryotic/mitochondrial release factor family. Methylated by PrmC. Methylation increases the termination efficiency of RF1.

It localises to the cytoplasm. Its function is as follows. Peptide chain release factor 1 directs the termination of translation in response to the peptide chain termination codons UAG and UAA. In Verminephrobacter eiseniae (strain EF01-2), this protein is Peptide chain release factor 1.